A 118-amino-acid chain; its full sequence is UPF0342 protein BC_0880 (118 aa).

It belongs to the UPF0342 family.

The polypeptide is UPF0342 protein BC_0880 (Bacillus cereus (strain ATCC 14579 / DSM 31 / CCUG 7414 / JCM 2152 / NBRC 15305 / NCIMB 9373 / NCTC 2599 / NRRL B-3711)).